The chain runs to 308 residues: Probable peptidyl-prolyl cis-trans isomerase B (308 aa).

Residues 74–123 (DHQSTTSATPTDSASTSPPQAATAPPLPPFKPSANLGANCQYPPSPDKAV) form a disordered region. The span at 77–97 (STTSATPTDSASTSPPQAATA) shows a compositional bias: low complexity. The PPIase cyclophilin-type domain maps to 139-307 (AQVSVSMVTN…TEVTITSVLL (169 aa)).

The protein belongs to the cyclophilin-type PPIase family.

It carries out the reaction [protein]-peptidylproline (omega=180) = [protein]-peptidylproline (omega=0). Functionally, PPIases accelerate the folding of proteins. It catalyzes the cis-trans isomerization of proline imidic peptide bonds in oligopeptides. The chain is Probable peptidyl-prolyl cis-trans isomerase B (ppiB) from Mycobacterium tuberculosis (strain CDC 1551 / Oshkosh).